We begin with the raw amino-acid sequence, 594 residues long: UvrABC system protein C (594 aa).

Residues asparagine 13–isoleucine 99 form the GIY-YIG domain. Residues aspartate 205–isoleucine 240 enclose the UVR domain.

It belongs to the UvrC family. As to quaternary structure, interacts with UvrB in an incision complex.

Its subcellular location is the cytoplasm. In terms of biological role, the UvrABC repair system catalyzes the recognition and processing of DNA lesions. UvrC both incises the 5' and 3' sides of the lesion. The N-terminal half is responsible for the 3' incision and the C-terminal half is responsible for the 5' incision. The sequence is that of UvrABC system protein C from Helicobacter pylori (strain G27).